We begin with the raw amino-acid sequence, 245 residues long: MTLFPVLLFLVAGLLPSFPANEDKDPAFTALLTTQTQVQREIVNKHNELRRAVSPPARNMLKMEWNKEAAANAQKWANQCNYRHSNPKDRMTSLKCGENLYMSSASSSWSQAIQSWFDEYNDFDFGVGPKTPNAVVGHYTQVVWYSSYLVGCGNAYCPNQKVLKYYYVCQYCPAGNWANRLYVPYEQGAPCASCPDNCDDGLCTNGCKYEDLYSNCKSLKLTLTCKHQLVRDSCKASCNCSNSIY.

Positions 1-20 (MTLFPVLLFLVAGLLPSFPA) are cleaved as a signal peptide. In terms of domain architecture, SCP spans 43-171 (VNKHNELRRA…VLKYYYVCQY (129 aa)). 5 disulfide bridges follow: Cys-191/Cys-198, Cys-194/Cys-203, Cys-207/Cys-240, Cys-216/Cys-234, and Cys-225/Cys-238. Residues 207 to 240 (CKYEDLYSNCKSLKLTLTCKHQLVRDSCKASCNC) enclose the ShKT domain. The N-linked (GlcNAc...) asparagine glycan is linked to Asn-239.

This sequence belongs to the CRISP family. As to quaternary structure, interacts with A1BG. Salivary gland, pancreas and prostate &gt; epididymis, ovary, thymus and colon.

Its subcellular location is the secreted. The chain is Cysteine-rich secretory protein 3 (CRISP3) from Homo sapiens (Human).